The sequence spans 502 residues: Glutamate--tRNA ligase (502 aa).

The 'HIGH' region motif lies at 9 to 19; sequence PSPTGFPHVGT. Positions 250-254 match the 'KMSKS' region motif; that stretch reads KLSKR. Lys-253 lines the ATP pocket.

Belongs to the class-I aminoacyl-tRNA synthetase family. Glutamate--tRNA ligase type 1 subfamily. In terms of assembly, monomer.

The protein localises to the cytoplasm. It catalyses the reaction tRNA(Glu) + L-glutamate + ATP = L-glutamyl-tRNA(Glu) + AMP + diphosphate. Functionally, catalyzes the attachment of glutamate to tRNA(Glu) in a two-step reaction: glutamate is first activated by ATP to form Glu-AMP and then transferred to the acceptor end of tRNA(Glu). The chain is Glutamate--tRNA ligase from Acinetobacter baylyi (strain ATCC 33305 / BD413 / ADP1).